The primary structure comprises 173 residues: RNA pyrophosphohydrolase (173 aa).

The Nudix hydrolase domain occupies 6–149 (GFRANVGIII…KRDVYRKVMK (144 aa)). Positions 38 to 59 (GGVDEGESAEEAMYRELYEEVG) match the Nudix box motif.

It belongs to the Nudix hydrolase family. RppH subfamily. A divalent metal cation serves as cofactor.

Functionally, accelerates the degradation of transcripts by removing pyrophosphate from the 5'-end of triphosphorylated RNA, leading to a more labile monophosphorylated state that can stimulate subsequent ribonuclease cleavage. The sequence is that of RNA pyrophosphohydrolase from Shewanella piezotolerans (strain WP3 / JCM 13877).